A 306-amino-acid polypeptide reads, in one-letter code: Large ribosomal subunit protein uL2m (306 aa).

A mitochondrion-targeting transit peptide spans 1–60; that stretch reads MALCALTSALRSLSLASAAITARVPTLLPAAQIQSNVLLQLPPALVSPSYRPVHMSADRS.

This sequence belongs to the universal ribosomal protein uL2 family. As to quaternary structure, component of the mitochondrial ribosome large subunit (39S) which comprises a 16S rRNA and about 50 distinct proteins.

The protein localises to the mitochondrion. The sequence is that of Large ribosomal subunit protein uL2m (Mrpl2) from Mus musculus (Mouse).